A 78-amino-acid chain; its full sequence is Sec-independent protein translocase protein TatA (78 aa).

Residues 1–21 (MGSLSIWHWLIVLLIVALVFG) traverse the membrane as a helical segment. Basic and acidic residues-rich tracts occupy residues 39-57 (FKEG…RDQL) and 65-78 (VDAK…GDSR). The tract at residues 39–78 (FKEGMKDGETPEGQQRDQLSRTNTVDVDAKEKAPHSGDSR) is disordered.

Belongs to the TatA/E family. As to quaternary structure, the Tat system comprises two distinct complexes: a TatABC complex, containing multiple copies of TatA, TatB and TatC subunits, and a separate TatA complex, containing only TatA subunits. Substrates initially bind to the TatABC complex, which probably triggers association of the separate TatA complex to form the active translocon.

The protein resides in the cell inner membrane. Functionally, part of the twin-arginine translocation (Tat) system that transports large folded proteins containing a characteristic twin-arginine motif in their signal peptide across membranes. TatA could form the protein-conducting channel of the Tat system. This chain is Sec-independent protein translocase protein TatA, found in Paraburkholderia phymatum (strain DSM 17167 / CIP 108236 / LMG 21445 / STM815) (Burkholderia phymatum).